A 111-amino-acid polypeptide reads, in one-letter code: Large ribosomal subunit protein uL23 (111 aa).

The protein belongs to the universal ribosomal protein uL23 family. As to quaternary structure, part of the 50S ribosomal subunit. Contacts protein L29, and trigger factor when it is bound to the ribosome.

Functionally, one of the early assembly proteins it binds 23S rRNA. One of the proteins that surrounds the polypeptide exit tunnel on the outside of the ribosome. Forms the main docking site for trigger factor binding to the ribosome. The polypeptide is Large ribosomal subunit protein uL23 (Nitrosomonas europaea (strain ATCC 19718 / CIP 103999 / KCTC 2705 / NBRC 14298)).